The chain runs to 57 residues: Large ribosomal subunit protein bL32c (57 aa).

The protein belongs to the bacterial ribosomal protein bL32 family.

The protein localises to the plastid. It localises to the chloroplast. This chain is Large ribosomal subunit protein bL32c, found in Liriodendron tulipifera (Tuliptree).